Consider the following 83-residue polypeptide: uncharacterized protein (83 aa).

This is an uncharacterized protein from Rhizobium meliloti (strain 1021) (Ensifer meliloti).